The following is a 131-amino-acid chain: MGSLRTRQLFHAALLWLCLPLPLLLCENLHCYYSPVLEKEITFELVVTECPPNEMCFKGLGRYGNYTALSARGCMLEKDCSQVHSLRLLGTVYTMSYSCCDWPYCNRAVALEPLTAMLVAAAVVACSFCLT.

The first 26 residues, 1–26, serve as a signal peptide directing secretion; sequence MGSLRTRQLFHAALLWLCLPLPLLLC. 4 disulfide bridges follow: C31–C56, C50–C74, C80–C99, and C100–C105. A UPAR/Ly6 domain is found at 31–106; it reads CYYSPVLEKE…YSCCDWPYCN (76 aa). N-linked (GlcNAc...) asparagine glycosylation is present at N65. N106 is lipidated: GPI-anchor amidated asparagine. Positions 107-131 are cleaved as a propeptide — removed in mature form; that stretch reads RAVALEPLTAMLVAAAVVACSFCLT.

The protein belongs to the SPACA4/bouncer family. Interacts with spermatocyte complex composed of izumo1, spaca6 and tmem81. As to expression, expressed in oocytes. Not expressed in testis.

The protein resides in the cell membrane. Functionally, oocyte-expressed fertilization factor that mediates sperm-egg binding and is essential for sperm entry into the egg. Necessary and sufficient to mediate species-specific gamete recognition and fertilization, which is essential for vertebrate species performing external fertilization. External fertilization cannot guarantee that only conspecific sperm reaches the egg by precopulatory mate choice: proteins such as Bouncer can therefore support the selection of conspecific sperm. This is Protein Bouncer from Oryzias latipes (Japanese rice fish).